The chain runs to 416 residues: Antigen EG13 (416 aa).

The F-BAR domain occupies Met1–Asp247. The interval Leu297–Thr327 is disordered. Over residues Thr312 to Thr327 the composition is skewed to polar residues. The SH3 domain maps to Arg361–Arg416.

This Echinococcus granulosus (Hydatid tapeworm) protein is Antigen EG13 (EG13).